The chain runs to 976 residues: Apical junction component 1 homolog (976 aa).

The tract at residues 21–49 (ATPGPASKCSPCERSVARPAEPAPFNKRH) is disordered. At Ser52 the chain carries Phosphoserine. Disordered regions lie at residues 61–136 (GPAM…EPAY), 220–242 (PQFHGLTVPGPRHMALSRTPTPS), and 264–294 (YAERRSLPFTTPPGPTQFFYTEEPQGFRGSF). Positions 98-113 (RAPPGLTPAPASPPVL) are enriched in pro residues. Over residues 116–134 (RGREAQRAARAEASPRREP) the composition is skewed to basic and acidic residues. Residue Ser129 is modified to Phosphoserine. At Arg322 the chain carries Omega-N-methylarginine. Positions 412–443 (LQVVPPSDPDPLLASWHGGTGTSPPRLATDSR) are disordered. Phosphoserine is present on residues Ser468, Ser509, and Ser512. Disordered stretches follow at residues 539–574 (DLRATERPSARAWELPGGRTRPPPHAAPDGPTSGRQ) and 614–660 (LDSR…ADED). 2 stretches are compositionally biased toward low complexity: residues 616 to 625 (SRPAGSGAPA) and 633 to 655 (PASAGSAEEPAAPGEAADASPEP). At Arg749 the chain carries Asymmetric dimethylarginine; alternate. Arg749 bears the Omega-N-methylarginine; alternate mark. Residues 855–888 (GSPARPPPARSREPDMETLILTPPPGTAGLDQDG) form a disordered region.

It is found in the apical cell membrane. It localises to the cell projection. Its subcellular location is the cilium. The protein localises to the cell junction. The protein resides in the adherens junction. May be involved in the control of adherens junction integrity. The protein is Apical junction component 1 homolog of Homo sapiens (Human).